The primary structure comprises 418 residues: Putative competence-damage inducible protein (418 aa).

The protein belongs to the CinA family.

The polypeptide is Putative competence-damage inducible protein (Streptococcus pneumoniae (strain CGSP14)).